A 474-amino-acid polypeptide reads, in one-letter code: ATP synthase subunit beta (474 aa).

153 to 160 is an ATP binding site; that stretch reads GGAGVGKT.

Belongs to the ATPase alpha/beta chains family. In terms of assembly, F-type ATPases have 2 components, CF(1) - the catalytic core - and CF(0) - the membrane proton channel. CF(1) has five subunits: alpha(3), beta(3), gamma(1), delta(1), epsilon(1). CF(0) has three main subunits: a(1), b(2) and c(9-12). The alpha and beta chains form an alternating ring which encloses part of the gamma chain. CF(1) is attached to CF(0) by a central stalk formed by the gamma and epsilon chains, while a peripheral stalk is formed by the delta and b chains.

Its subcellular location is the cell inner membrane. The enzyme catalyses ATP + H2O + 4 H(+)(in) = ADP + phosphate + 5 H(+)(out). Its function is as follows. Produces ATP from ADP in the presence of a proton gradient across the membrane. The catalytic sites are hosted primarily by the beta subunits. In Rickettsia prowazekii (strain Madrid E), this protein is ATP synthase subunit beta.